Reading from the N-terminus, the 528-residue chain is Cytochrome P450 monooxygenase polB (528 aa).

A helical transmembrane segment spans residues 3-23 (SFFLVCPVAFLGFTICYLVYV). Cys-473 contributes to the heme binding site.

It belongs to the cytochrome P450 family. It depends on heme as a cofactor.

The protein localises to the membrane. It catalyses the reaction 4beta-carboxyl motiol + reduced [NADPH--hemoprotein reductase] + O2 = 2alpha-hydroxyl, 4beta-carboxyl motiol + oxidized [NADPH--hemoprotein reductase] + H2O + H(+). The enzyme catalyses 2-deoxypolytolypin + reduced [NADPH--hemoprotein reductase] + O2 = polytolypin + oxidized [NADPH--hemoprotein reductase] + H2O + H(+). It participates in secondary metabolite biosynthesis; terpenoid biosynthesis. In terms of biological role, cytochrome P450 monooxygenase; part of the gene cluster that mediates the biosynthesis of antifungal fernane-type triterpenoid polytolypin. PolB acts as a hydroxylase and installs the 2-alpha-hydroxyl group in polytolypin. Within the pathway, the triterpene cyclase polA first catalyzes the cyclization of 2,3-oxidosqualene to motiol, polC converts the 4-alpha-methyl group of motiol to a carboxyl group, polB is responsible for appending a hydroxyl group at the 2-alpha position and polE is a dual functional P450, which can catalyze the formation of both the 1-beta-hydroxyl group and 10-beta-carboxyl group. The protein is Cytochrome P450 monooxygenase polB of Polytolypa hystricis (strain UAMH7299).